A 236-amino-acid polypeptide reads, in one-letter code: MTVNALLLSSSRVGDTPYLSHAIPFIKPLTADAQKWIFIPYAGVSMNYDTYLASVVTGLSELKLDISGIHQHPDPRQALKDADGILIGGGNTFHLLHELYKYDLVQLIREEVLKGKPYIGWSAGSNVSGLSIRTTNDMPIIEPPSFAALNILPFQLNPHYSNYRAPGHNGETRAQRLLEFTRVDPITPVIGIVEGSALWRQGETLSLLGENPAYLFCGEQQEIPIPVGSDLSHLLK.

Catalysis depends on charge relay system residues S122, D137, and H159.

Belongs to the peptidase S51 family.

It is found in the cytoplasm. It carries out the reaction Dipeptidase E catalyzes the hydrolysis of dipeptides Asp-|-Xaa. It does not act on peptides with N-terminal Glu, Asn or Gln, nor does it cleave isoaspartyl peptides.. In terms of biological role, hydrolyzes dipeptides containing N-terminal aspartate residues. May play a role in allowing the cell to use peptide aspartate to spare carbon otherwise required for the synthesis of the aspartate family of amino acids. The protein is Peptidase E of Shewanella oneidensis (strain ATCC 700550 / JCM 31522 / CIP 106686 / LMG 19005 / NCIMB 14063 / MR-1).